Here is a 632-residue protein sequence, read N- to C-terminus: Probable potassium transport system protein Kup (632 aa).

12 consecutive transmembrane segments (helical) span residues 17-37, 60-80, 106-126, 146-166, 175-195, 210-230, 254-274, 292-312, 344-364, 370-390, 401-421, and 426-446; these read LFYL…TSPL, LISL…VLFL, TAIL…DAMI, LSEY…VVQS, FFGP…ISHI, AVSF…AVFL, WFLL…ALVL, ALLP…QAVI, IFVP…VLSF, LATA…IMAF, LPVA…FLGA, and IHDG…IMWT.

The protein belongs to the HAK/KUP transporter (TC 2.A.72) family.

The protein resides in the cell inner membrane. The enzyme catalyses K(+)(in) + H(+)(in) = K(+)(out) + H(+)(out). Transport of potassium into the cell. Likely operates as a K(+):H(+) symporter. This is Probable potassium transport system protein Kup from Rhizobium rhizogenes (Agrobacterium rhizogenes).